A 192-amino-acid chain; its full sequence is Cell division protein SepF (192 aa).

A disordered region spans residues 154–192 (QEEPAPSNVTTTTQQSEETISESVTAPEPAWGTPVASAI). The span at 162 to 178 (VTTTTQQSEETISESVT) shows a compositional bias: low complexity.

The protein belongs to the SepF family. As to quaternary structure, homodimer. Interacts with FtsZ.

It localises to the cytoplasm. In terms of biological role, cell division protein that is part of the divisome complex and is recruited early to the Z-ring. Probably stimulates Z-ring formation, perhaps through the cross-linking of FtsZ protofilaments. Its function overlaps with FtsA. This chain is Cell division protein SepF, found in Prochlorococcus marinus (strain MIT 9211).